Reading from the N-terminus, the 231-residue chain is Probable transglycosylase SceD (231 aa).

Positions 1–27 are cleaved as a signal peptide; the sequence is MKKTLLASSLAVGLGIVAGNAGHEAHA. The span at 103–116 shows a compositional bias: polar residues; the sequence is APSAVQANQVQSQE. The disordered stretch occupies residues 103–153; sequence APSAVQANQVQSQEVEAPQNAQTQQPQASTSNNSQVTATPTESKSSEGSSV. A compositionally biased stretch (low complexity) spans 119–137; it reads APQNAQTQQPQASTSNNSQ. Residues 138–153 show a composition bias toward polar residues; the sequence is VTATPTESKSSEGSSV.

This sequence belongs to the transglycosylase family. SceD subfamily.

It localises to the secreted. Its function is as follows. Is able to cleave peptidoglycan and affects clumping and separation of bacterial cells. In Staphylococcus aureus (strain COL), this protein is Probable transglycosylase SceD (sceD).